Reading from the N-terminus, the 118-residue chain is UPF0295 protein BCE_0593 (118 aa).

Helical transmembrane passes span 12 to 32 and 43 to 63; these read IRTF…LGVF and FMMV…WIGM.

It belongs to the UPF0295 family.

It localises to the cell membrane. This Bacillus cereus (strain ATCC 10987 / NRS 248) protein is UPF0295 protein BCE_0593.